Consider the following 232-residue polypeptide: MKELQTVLKNHFAIEFTDKNLLETAFTHTSYANEHRLLKISHNERLEFLGDAVLQLLISEYLYKKYPKKPEGDLSKLRAMIVREESLAGFARDCQFDQFIKLGKGEEKSGGRNRDTILGDAFEAFLGALLLDKDVAKVKEFIYQVMIPKVEAGEFEMITDYKTHLQELLQVNGDVAIRYQVISETGPAHDKVFDVEVLVEGKSIGQGQGRSKKLAEQEAAKNAVEKGLDSCI.

The region spanning 5 to 134 (QTVLKNHFAI…FLGALLLDKD (130 aa)) is the RNase III domain. E47 provides a ligand contact to Mg(2+). D51 is an active-site residue. Positions 120 and 123 each coordinate Mg(2+). E123 is an active-site residue. The 70-residue stretch at 160-229 (DYKTHLQELL…AKNAVEKGLD (70 aa)) folds into the DRBM domain.

It belongs to the ribonuclease III family. As to quaternary structure, homodimer. Requires Mg(2+) as cofactor.

The protein localises to the cytoplasm. The enzyme catalyses Endonucleolytic cleavage to 5'-phosphomonoester.. Functionally, digests double-stranded RNA. Involved in the processing of primary rRNA transcript to yield the immediate precursors to the large and small rRNAs (23S and 16S). Processes some mRNAs, and tRNAs when they are encoded in the rRNA operon. Processes pre-crRNA and tracrRNA of type II CRISPR loci if present in the organism. The sequence is that of Ribonuclease 3 from Streptococcus pneumoniae (strain Taiwan19F-14).